The primary structure comprises 493 residues: Beta-amyrin 11-oxidase (493 aa).

The chain crosses the membrane as a helical span at residues 7–23 (CMSAATLLVCYIFGSKF). Cysteine 439 is a heme binding site.

Belongs to the cytochrome P450 family. The cofactor is heme. As to expression, expressed in roots and stolons. Not detected in leaves and stems.

It is found in the membrane. The catalysed reaction is beta-amyrin + 2 reduced [NADPH--hemoprotein reductase] + 2 O2 = 11-oxo-beta-amyrin + 2 oxidized [NADPH--hemoprotein reductase] + 3 H2O + 2 H(+). It carries out the reaction beta-amyrin + reduced [NADPH--hemoprotein reductase] + O2 = 11alpha-hydroxy-beta-amyrin + oxidized [NADPH--hemoprotein reductase] + H2O + H(+). It catalyses the reaction 11alpha-hydroxy-beta-amyrin + reduced [NADPH--hemoprotein reductase] + O2 = 11-oxo-beta-amyrin + oxidized [NADPH--hemoprotein reductase] + 2 H2O + H(+). Involved in the biosynthesis of Glycyrrhetinic acid (GA), a natural product which exhibits anti-inflammatory activity. Catalyzes 2 successive oxidations of beta-amyrin, producing a precursor of the triterpene sweetener glycyrrhizin. Unable to use 11-deoxoglycyrrhetinic acid or ent-kaurenoic acid as substrates. This chain is Beta-amyrin 11-oxidase, found in Glycyrrhiza uralensis (Chinese licorice).